Reading from the N-terminus, the 571-residue chain is Proline--tRNA ligase (571 aa).

This sequence belongs to the class-II aminoacyl-tRNA synthetase family. ProS type 1 subfamily. As to quaternary structure, homodimer.

It localises to the cytoplasm. The catalysed reaction is tRNA(Pro) + L-proline + ATP = L-prolyl-tRNA(Pro) + AMP + diphosphate. Catalyzes the attachment of proline to tRNA(Pro) in a two-step reaction: proline is first activated by ATP to form Pro-AMP and then transferred to the acceptor end of tRNA(Pro). As ProRS can inadvertently accommodate and process non-cognate amino acids such as alanine and cysteine, to avoid such errors it has two additional distinct editing activities against alanine. One activity is designated as 'pretransfer' editing and involves the tRNA(Pro)-independent hydrolysis of activated Ala-AMP. The other activity is designated 'posttransfer' editing and involves deacylation of mischarged Ala-tRNA(Pro). The misacylated Cys-tRNA(Pro) is not edited by ProRS. The sequence is that of Proline--tRNA ligase from Mannheimia succiniciproducens (strain KCTC 0769BP / MBEL55E).